The chain runs to 212 residues: Large ribosomal subunit protein uL3 (212 aa).

N5-methylglutamine is present on Gln-153.

This sequence belongs to the universal ribosomal protein uL3 family. In terms of assembly, part of the 50S ribosomal subunit. Forms a cluster with proteins L14 and L19. In terms of processing, methylated by PrmB.

Functionally, one of the primary rRNA binding proteins, it binds directly near the 3'-end of the 23S rRNA, where it nucleates assembly of the 50S subunit. The sequence is that of Large ribosomal subunit protein uL3 from Shewanella piezotolerans (strain WP3 / JCM 13877).